The chain runs to 107 residues: Thioredoxin (107 aa).

The Thioredoxin domain maps to 2-107; it reads SATPQVSDAS…TLASTLEKYL (106 aa). Cysteine 32 and cysteine 35 form a disulfide bridge.

It belongs to the thioredoxin family.

Its function is as follows. Component of the thioredoxin-thioredoxin reductase system. Participates in various redox reactions through the reversible oxidation of its active center dithiol to a disulfide and catalyzes dithiol-disulfide exchange reactions. This is Thioredoxin (trxA) from Synechocystis sp. (strain ATCC 27184 / PCC 6803 / Kazusa).